The chain runs to 451 residues: Tubulin alpha chain (451 aa).

Glutamine 11 contributes to the GTP binding site. An N6-acetyllysine modification is found at lysine 40. GTP-binding residues include glutamate 71, glycine 144, threonine 145, threonine 179, asparagine 206, and asparagine 228. Glutamate 71 provides a ligand contact to Mg(2+). Residue glutamate 254 is part of the active site.

The protein belongs to the tubulin family. As to quaternary structure, dimer of alpha and beta chains. A typical microtubule is a hollow water-filled tube with an outer diameter of 25 nm and an inner diameter of 15 nM. Alpha-beta heterodimers associate head-to-tail to form protofilaments running lengthwise along the microtubule wall with the beta-tubulin subunit facing the microtubule plus end conferring a structural polarity. Microtubules usually have 13 protofilaments but different protofilament numbers can be found in some organisms and specialized cells. The cofactor is Mg(2+). In terms of processing, undergoes a tyrosination/detyrosination cycle, the cyclic removal and re-addition of a C-terminal tyrosine residue by the enzymes tubulin tyrosine carboxypeptidase (TTCP) and tubulin tyrosine ligase (TTL), respectively. Acetylation of alpha chains at Lys-40 stabilizes microtubules and affects affinity and processivity of microtubule motors. This modification has a role in multiple cellular functions, ranging from cell motility, cell cycle progression or cell differentiation to intracellular trafficking and signaling.

The protein localises to the cytoplasm. It is found in the cytoskeleton. It carries out the reaction GTP + H2O = GDP + phosphate + H(+). Tubulin is the major constituent of microtubules, a cylinder consisting of laterally associated linear protofilaments composed of alpha- and beta-tubulin heterodimers. Microtubules grow by the addition of GTP-tubulin dimers to the microtubule end, where a stabilizing cap forms. Below the cap, tubulin dimers are in GDP-bound state, owing to GTPase activity of alpha-tubulin. The chain is Tubulin alpha chain (TUBA) from Triticum aestivum (Wheat).